Consider the following 240-residue polypeptide: Uridylate kinase (240 aa).

Residue Lys13–Gly16 coordinates ATP. Residues Gly21–Gly26 are involved in allosteric activation by GTP. Gly55 lines the UMP pocket. ATP is bound by residues Gly56 and Arg60. Residues Asp75 and Thr136–Thr143 contribute to the UMP site. 4 residues coordinate ATP: Thr163, Gln164, Tyr169, and Asp172.

The protein belongs to the UMP kinase family. In terms of assembly, homohexamer.

It localises to the cytoplasm. It carries out the reaction UMP + ATP = UDP + ADP. It participates in pyrimidine metabolism; CTP biosynthesis via de novo pathway; UDP from UMP (UMPK route): step 1/1. Allosterically activated by GTP. Inhibited by UTP. Functionally, catalyzes the reversible phosphorylation of UMP to UDP. The polypeptide is Uridylate kinase (Brucella suis biovar 1 (strain 1330)).